A 236-amino-acid chain; its full sequence is 2,3,4,5-tetrahydropyridine-2,6-dicarboxylate N-acetyltransferase (236 aa).

This sequence belongs to the transferase hexapeptide repeat family. DapH subfamily.

The catalysed reaction is (S)-2,3,4,5-tetrahydrodipicolinate + acetyl-CoA + H2O = L-2-acetamido-6-oxoheptanedioate + CoA. The protein operates within amino-acid biosynthesis; L-lysine biosynthesis via DAP pathway; LL-2,6-diaminopimelate from (S)-tetrahydrodipicolinate (acetylase route): step 1/3. Functionally, catalyzes the transfer of an acetyl group from acetyl-CoA to tetrahydrodipicolinate. This chain is 2,3,4,5-tetrahydropyridine-2,6-dicarboxylate N-acetyltransferase, found in Oceanobacillus iheyensis (strain DSM 14371 / CIP 107618 / JCM 11309 / KCTC 3954 / HTE831).